The following is a 341-amino-acid chain: Mediator of RNA polymerase II transcription subunit 18 (341 aa).

Residues 139–216 form a disordered region; the sequence is KVMDKEKVQS…KEHSEGNASQ (78 aa). The span at 163–211 shows a compositional bias: basic and acidic residues; it reads EDKKENIKKEESGEEVKGSGEEVKGSGEEVKGSGEEAKKSGEEAKEHSE.

The protein belongs to the Mediator complex subunit 18 family. Component of the Mediator complex.

Its subcellular location is the nucleus. Its function is as follows. Component of the Mediator complex, a coactivator involved in the regulated transcription of nearly all RNA polymerase II-dependent genes. Mediator functions as a bridge to convey information from gene-specific regulatory proteins to the basal RNA polymerase II transcription machinery. Mediator is recruited to promoters by direct interactions with regulatory proteins and serves as a scaffold for the assembly of a functional preinitiation complex with RNA polymerase II and the general transcription factors. In Debaryomyces hansenii (strain ATCC 36239 / CBS 767 / BCRC 21394 / JCM 1990 / NBRC 0083 / IGC 2968) (Yeast), this protein is Mediator of RNA polymerase II transcription subunit 18 (SRB5).